A 226-amino-acid polypeptide reads, in one-letter code: Urease accessory protein UreF (226 aa).

Belongs to the UreF family. As to quaternary structure, ureD, UreF and UreG form a complex that acts as a GTP-hydrolysis-dependent molecular chaperone, activating the urease apoprotein by helping to assemble the nickel containing metallocenter of UreC. The UreE protein probably delivers the nickel.

The protein localises to the cytoplasm. Its function is as follows. Required for maturation of urease via the functional incorporation of the urease nickel metallocenter. In Burkholderia cenocepacia (strain HI2424), this protein is Urease accessory protein UreF.